The primary structure comprises 130 residues: Small ribosomal subunit protein bS6 (130 aa).

Residues 99–130 (ASPMVKAKDERRERHDFASEANDDSEAGDSEE) form a disordered region. Over residues 104–116 (KAKDERRERHDFA) the composition is skewed to basic and acidic residues. A compositionally biased stretch (acidic residues) spans 119–130 (ANDDSEAGDSEE).

This sequence belongs to the bacterial ribosomal protein bS6 family.

Its function is as follows. Binds together with bS18 to 16S ribosomal RNA. In Yersinia enterocolitica serotype O:8 / biotype 1B (strain NCTC 13174 / 8081), this protein is Small ribosomal subunit protein bS6.